Reading from the N-terminus, the 142-residue chain is MANGKYAARKLKQDRQQRRWSDSEYARRERGLGAKSDPLEGAPQGRGIVLEKVGIEAKQPNSAIRKCVRVQLIKNGKQVTAFCPGDGAISFIDEHDEVTIAGIGGAKGRAMGDLSGVNYKVEKVNGVSLIELVRGNAEKPVR.

The segment at 1 to 44 (MANGKYAARKLKQDRQQRRWSDSEYARRERGLGAKSDPLEGAPQ) is disordered. Basic and acidic residues predominate over residues 11–32 (LKQDRQQRRWSDSEYARRERGL).

It belongs to the universal ribosomal protein uS12 family. Part of the 30S ribosomal subunit.

With S4 and S5 plays an important role in translational accuracy. Located at the interface of the 30S and 50S subunits. This is Small ribosomal subunit protein uS12 from Haloquadratum walsbyi (strain DSM 16790 / HBSQ001).